The chain runs to 463 residues: L-seryl-tRNA(Sec) selenium transferase (463 aa).

Residue Lys295 is modified to N6-(pyridoxal phosphate)lysine.

The protein belongs to the SelA family. As to quaternary structure, homodecamer; pentamer of dimers. Binds only one seryl-tRNA(Sec) per dimer. It depends on pyridoxal 5'-phosphate as a cofactor.

The protein resides in the cytoplasm. It catalyses the reaction L-seryl-tRNA(Sec) + selenophosphate + H(+) = L-selenocysteinyl-tRNA(Sec) + phosphate. It functions in the pathway aminoacyl-tRNA biosynthesis; selenocysteinyl-tRNA(Sec) biosynthesis; selenocysteinyl-tRNA(Sec) from L-seryl-tRNA(Sec) (bacterial route): step 1/1. In terms of biological role, converts seryl-tRNA(Sec) to selenocysteinyl-tRNA(Sec) required for selenoprotein biosynthesis. The protein is L-seryl-tRNA(Sec) selenium transferase of Shigella boydii serotype 4 (strain Sb227).